The following is a 291-amino-acid chain: Shikimate dehydrogenase (NADP(+)) (291 aa).

Shikimate is bound by residues 18–20 (SLS) and Thr-70. Lys-74 (proton acceptor) is an active-site residue. The shikimate site is built by Asn-95 and Asp-110. NADP(+) is bound by residues 134–138 (GAGGA) and Val-228. Residue Tyr-230 coordinates shikimate. Position 251 (Gly-251) interacts with NADP(+).

This sequence belongs to the shikimate dehydrogenase family. In terms of assembly, homodimer.

It catalyses the reaction shikimate + NADP(+) = 3-dehydroshikimate + NADPH + H(+). Its pathway is metabolic intermediate biosynthesis; chorismate biosynthesis; chorismate from D-erythrose 4-phosphate and phosphoenolpyruvate: step 4/7. Functionally, involved in the biosynthesis of the chorismate, which leads to the biosynthesis of aromatic amino acids. Catalyzes the reversible NADPH linked reduction of 3-dehydroshikimate (DHSA) to yield shikimate (SA). This Streptomyces avermitilis (strain ATCC 31267 / DSM 46492 / JCM 5070 / NBRC 14893 / NCIMB 12804 / NRRL 8165 / MA-4680) protein is Shikimate dehydrogenase (NADP(+)).